The chain runs to 717 residues: Fatty acid oxidation complex subunit alpha (717 aa).

The enoyl-CoA hydratase/isomerase stretch occupies residues methionine 1 to serine 190. Aspartate 298 provides a ligand contact to substrate. The tract at residues histidine 313–glycine 717 is 3-hydroxyacyl-CoA dehydrogenase. Residues methionine 326, aspartate 345, valine 402–glutamate 404, lysine 409, and serine 431 each bind NAD(+). Histidine 452 acts as the For 3-hydroxyacyl-CoA dehydrogenase activity in catalysis. Asparagine 455 provides a ligand contact to NAD(+). Asparagine 502 provides a ligand contact to substrate.

In the N-terminal section; belongs to the enoyl-CoA hydratase/isomerase family. This sequence in the C-terminal section; belongs to the 3-hydroxyacyl-CoA dehydrogenase family. Heterotetramer of two alpha chains (FadB) and two beta chains (FadA).

The catalysed reaction is a (3S)-3-hydroxyacyl-CoA + NAD(+) = a 3-oxoacyl-CoA + NADH + H(+). It catalyses the reaction a (3S)-3-hydroxyacyl-CoA = a (2E)-enoyl-CoA + H2O. It carries out the reaction a 4-saturated-(3S)-3-hydroxyacyl-CoA = a (3E)-enoyl-CoA + H2O. The enzyme catalyses (3S)-3-hydroxybutanoyl-CoA = (3R)-3-hydroxybutanoyl-CoA. The catalysed reaction is a (3Z)-enoyl-CoA = a 4-saturated (2E)-enoyl-CoA. It catalyses the reaction a (3E)-enoyl-CoA = a 4-saturated (2E)-enoyl-CoA. The protein operates within lipid metabolism; fatty acid beta-oxidation. In terms of biological role, involved in the aerobic and anaerobic degradation of long-chain fatty acids via beta-oxidation cycle. Catalyzes the formation of 3-oxoacyl-CoA from enoyl-CoA via L-3-hydroxyacyl-CoA. It can also use D-3-hydroxyacyl-CoA and cis-3-enoyl-CoA as substrate. This Acinetobacter baylyi (strain ATCC 33305 / BD413 / ADP1) protein is Fatty acid oxidation complex subunit alpha.